A 379-amino-acid polypeptide reads, in one-letter code: MLDHPLNSLGFAKPPAATRVVVAMSGGVDSSVVAAELAAEGYDVVGVTLQLYDHGAALAKKGACCAGRDIHDARRVAETMGFPHYVLDYENTFREAVIDEFADAYLAGATPVPCIRCNERVKFKDLLQTAKDLDADCMATGHYIQRKMGPAGPELHCAADAARDQSYFLFSTTPEQLAFLRFPLGHLASKAETRALAARHGLPVADKPDSQDICFVPNGNYAEVIQKLRPGAADPGEIVDLSGRVLGEHRGVIHYTIGQRRGLGIGGLGDPLYVVRLDPERRQVIVGPKEALSTRIVPVREINWLGDAPLTSRSEWQVMAKVRSTRAPREAVIRPLSDTEAEVELIAPEDGVSPGQACVFYAPGDSRILGGGWIWRGAR.

ATP-binding positions include 23-30 (AMSGGVDS) and Leu-49. Cys-117 functions as the Nucleophile in the catalytic mechanism. The cysteines at positions 117 and 214 are disulfide-linked. Residue Gly-141 participates in ATP binding. An interaction with tRNA region spans residues 163–165 (RDQ). Cys-214 functions as the Cysteine persulfide intermediate in the catalytic mechanism.

The protein belongs to the MnmA/TRMU family.

It localises to the cytoplasm. It carries out the reaction S-sulfanyl-L-cysteinyl-[protein] + uridine(34) in tRNA + AH2 + ATP = 2-thiouridine(34) in tRNA + L-cysteinyl-[protein] + A + AMP + diphosphate + H(+). Its function is as follows. Catalyzes the 2-thiolation of uridine at the wobble position (U34) of tRNA, leading to the formation of s(2)U34. The sequence is that of tRNA-specific 2-thiouridylase MnmA from Cereibacter sphaeroides (strain ATCC 17029 / ATH 2.4.9) (Rhodobacter sphaeroides).